The primary structure comprises 214 residues: Adenylate kinase (214 aa).

Residue 10 to 15 participates in ATP binding; sequence GAGKGT. The segment at 30–59 is NMP; that stretch reads STGDIFRANIKNGTELGKKAKTYMDQGALV. AMP contacts are provided by residues T31, R36, 57–59, 85–88, and Q92; these read ALV and GFPR. An LID region spans residues 126–163; sequence GRRACLNCGATYHIVFNPTKVEGKCDACGADTVLRDDD. R127 is a binding site for ATP. 2 residues coordinate Zn(2+): C130 and C133. 136–137 lines the ATP pocket; sequence TY. Residues C150 and C153 each coordinate Zn(2+). Residues R160 and R171 each contribute to the AMP site. ATP is bound at residue K199.

The protein belongs to the adenylate kinase family. In terms of assembly, monomer.

The protein resides in the cytoplasm. The enzyme catalyses AMP + ATP = 2 ADP. The protein operates within purine metabolism; AMP biosynthesis via salvage pathway; AMP from ADP: step 1/1. Its function is as follows. Catalyzes the reversible transfer of the terminal phosphate group between ATP and AMP. Plays an important role in cellular energy homeostasis and in adenine nucleotide metabolism. The polypeptide is Adenylate kinase (Agathobacter rectalis (strain ATCC 33656 / DSM 3377 / JCM 17463 / KCTC 5835 / VPI 0990) (Eubacterium rectale)).